The primary structure comprises 247 residues: Probable transcriptional regulatory protein BT_0627 (247 aa).

The protein belongs to the TACO1 family.

Its subcellular location is the cytoplasm. The sequence is that of Probable transcriptional regulatory protein BT_0627 from Bacteroides thetaiotaomicron (strain ATCC 29148 / DSM 2079 / JCM 5827 / CCUG 10774 / NCTC 10582 / VPI-5482 / E50).